Consider the following 162-residue polypeptide: Phosphopantetheine adenylyltransferase (162 aa).

T10 contacts substrate. Residues T10 to F11 and H18 contribute to the ATP site. Residues K42, M74, and R88 each contribute to the substrate site. ATP is bound by residues G89–R91, E99, and Y124–T130.

This sequence belongs to the bacterial CoaD family. As to quaternary structure, homohexamer. The cofactor is Mg(2+).

It is found in the cytoplasm. The enzyme catalyses (R)-4'-phosphopantetheine + ATP + H(+) = 3'-dephospho-CoA + diphosphate. It participates in cofactor biosynthesis; coenzyme A biosynthesis; CoA from (R)-pantothenate: step 4/5. In terms of biological role, reversibly transfers an adenylyl group from ATP to 4'-phosphopantetheine, yielding dephospho-CoA (dPCoA) and pyrophosphate. This is Phosphopantetheine adenylyltransferase from Aliivibrio salmonicida (strain LFI1238) (Vibrio salmonicida (strain LFI1238)).